Reading from the N-terminus, the 242-residue chain is Uridylate kinase (242 aa).

An ATP-binding site is contributed by 12–15 (KLSG). The tract at residues 20-25 (GQKGYG) is involved in allosteric activation by GTP. Gly-54 serves as a coordination point for UMP. Gly-55 and Arg-59 together coordinate ATP. UMP-binding positions include Asp-74 and 135 to 142 (TGNPYFST). ATP-binding residues include Gln-163, Tyr-168, and Asp-171.

Belongs to the UMP kinase family. Homohexamer.

Its subcellular location is the cytoplasm. It catalyses the reaction UMP + ATP = UDP + ADP. It participates in pyrimidine metabolism; CTP biosynthesis via de novo pathway; UDP from UMP (UMPK route): step 1/1. Its activity is regulated as follows. Allosterically activated by GTP. Inhibited by UTP. Its function is as follows. Catalyzes the reversible phosphorylation of UMP to UDP. The polypeptide is Uridylate kinase (Desulforamulus reducens (strain ATCC BAA-1160 / DSM 100696 / MI-1) (Desulfotomaculum reducens)).